The primary structure comprises 230 residues: Large ribosomal subunit protein uL1 (230 aa).

It belongs to the universal ribosomal protein uL1 family. Part of the 50S ribosomal subunit.

Binds directly to 23S rRNA. The L1 stalk is quite mobile in the ribosome, and is involved in E site tRNA release. In terms of biological role, protein L1 is also a translational repressor protein, it controls the translation of the L11 operon by binding to its mRNA. This chain is Large ribosomal subunit protein uL1, found in Bifidobacterium longum subsp. infantis (strain ATCC 15697 / DSM 20088 / JCM 1222 / NCTC 11817 / S12).